Here is a 113-residue protein sequence, read N- to C-terminus: U11-theraphotoxin-Hhn1a (113 aa).

Positions 1–21 (MDTVRVAFLLVLVLAVSLGQA) are cleaved as a signal peptide. The propeptide occupies 22–74 (DKDENRMEMQEKTEQGKSYLDFAENLLLQKLEELEAKLLEEDSEESRNSRQKR). Residues 60–69 (LEEDSEESRN) show a composition bias toward basic and acidic residues. Residues 60 to 83 (LEEDSEESRNSRQKRCIGEGVPCD) form a disordered region. Intrachain disulfides connect C75–C90, C82–C95, and C89–C110.

This sequence belongs to the neurotoxin 14 (magi-1) family. 01 (HNTX-16) subfamily. As to expression, expressed by the venom gland.

Its subcellular location is the secreted. In terms of biological role, probable ion channel inhibitor. This chain is U11-theraphotoxin-Hhn1a, found in Cyriopagopus hainanus (Chinese bird spider).